Reading from the N-terminus, the 245-residue chain is 1-(5-phosphoribosyl)-5-[(5-phosphoribosylamino)methylideneamino] imidazole-4-carboxamide isomerase (245 aa).

Asp7 acts as the Proton acceptor in catalysis. The active-site Proton donor is the Asp129.

The protein belongs to the HisA/HisF family.

Its subcellular location is the cytoplasm. It catalyses the reaction 1-(5-phospho-beta-D-ribosyl)-5-[(5-phospho-beta-D-ribosylamino)methylideneamino]imidazole-4-carboxamide = 5-[(5-phospho-1-deoxy-D-ribulos-1-ylimino)methylamino]-1-(5-phospho-beta-D-ribosyl)imidazole-4-carboxamide. It functions in the pathway amino-acid biosynthesis; L-histidine biosynthesis; L-histidine from 5-phospho-alpha-D-ribose 1-diphosphate: step 4/9. The sequence is that of 1-(5-phosphoribosyl)-5-[(5-phosphoribosylamino)methylideneamino] imidazole-4-carboxamide isomerase from Serratia proteamaculans (strain 568).